We begin with the raw amino-acid sequence, 499 residues long: Lipopolysaccharide core galacturonosyltransferase RgtA (499 aa).

10 consecutive transmembrane segments (helical) span residues 11-31 (TAGLLLAAYFVLNIVLRIVLP), 74-94 (IGALIVPKNILLFLSYLFYGL), 103-123 (EALAAVGMLALITLPQVSYMA), 125-145 (QDLTHTTALLFASSLFLYGFF), 165-185 (IGLISKYNFALMPVVALIAIL), 199-219 (MLAAITVALVIVLPHAVWLQG), 248-268 (LLAFLVAIIAFAALPVVIFAA), 291-311 (MMLASLAGIALIVLFTGSTTV), 316-336 (LDPFLLVLPIYFLAKMQAAGL), and 351-371 (VLMACVLIALGFRVVGAGLIG).

The protein belongs to the glycosyltransferase 83 family.

The protein localises to the cell inner membrane. Its pathway is bacterial outer membrane biogenesis; LPS core biosynthesis. Functionally, involved in the modification of the lipopolysaccharide (LPS) inner core. Catalyzes the transfer of a galacturonic acid (GalA) residue to the 4-position of the outer Kdo (3-deoxy-D-manno-octulosonic acid) residue of the LPS inner core, using dodecaprenyl phosphate-GalA as the donor substrate. GalA addition by RgtA is required for RgtB activity. In Rhizobium johnstonii (strain DSM 114642 / LMG 32736 / 3841) (Rhizobium leguminosarum bv. viciae), this protein is Lipopolysaccharide core galacturonosyltransferase RgtA.